Consider the following 253-residue polypeptide: Trans-aconitate 2-methyltransferase (253 aa).

The protein belongs to the methyltransferase superfamily. Tam family.

It is found in the cytoplasm. It carries out the reaction trans-aconitate + S-adenosyl-L-methionine = (E)-3-(methoxycarbonyl)pent-2-enedioate + S-adenosyl-L-homocysteine. Catalyzes the S-adenosylmethionine monomethyl esterification of trans-aconitate. The chain is Trans-aconitate 2-methyltransferase from Azoarcus sp. (strain BH72).